The sequence spans 602 residues: Adenylosuccinate synthetase (602 aa).

Residues 74–80 (GDEGKGK) and 104–106 (GHT) each bind GTP. Aspartate 75 (proton acceptor) is an active-site residue. Residues aspartate 75 and glycine 104 each coordinate Mg(2+). IMP is bound by residues 75-78 (DEGK), 102-105 (NAGH), threonine 189, lysine 203, glutamine 315, threonine 331, and lysine 459. Catalysis depends on histidine 105, which acts as the Proton donor. Residue 455-461 (AVTKKPR) participates in substrate binding. GTP contacts are provided by residues arginine 461 and 589 to 591 (GNG).

Belongs to the adenylosuccinate synthetase family. In terms of assembly, homodimer. It depends on Mg(2+) as a cofactor.

Its subcellular location is the cytoplasm. The enzyme catalyses IMP + L-aspartate + GTP = N(6)-(1,2-dicarboxyethyl)-AMP + GDP + phosphate + 2 H(+). It participates in purine metabolism; AMP biosynthesis via de novo pathway; AMP from IMP: step 1/2. In terms of biological role, plays an important role in the salvage pathway for purine nucleotide biosynthesis. Catalyzes the first committed step in the biosynthesis of AMP from IMP. The sequence is that of Adenylosuccinate synthetase from Trypanosoma brucei gambiense (strain MHOM/CI/86/DAL972).